The sequence spans 378 residues: Deoxyguanosinetriphosphate triphosphohydrolase-like protein (378 aa).

Positions Met-1–Phe-28 are disordered. The region spanning Arg-62 to Ser-198 is the HD domain.

This sequence belongs to the dGTPase family. Type 2 subfamily.

The chain is Deoxyguanosinetriphosphate triphosphohydrolase-like protein from Cereibacter sphaeroides (strain ATCC 17029 / ATH 2.4.9) (Rhodobacter sphaeroides).